Consider the following 519-residue polypeptide: Ribonuclease Y 1 (519 aa).

The helical transmembrane segment at 2–22 threads the bilayer; the sequence is IILYIILAIIAIVVGYCAGFF. Positions 84 to 113 are disordered; sequence QKQEDRLLQREDSLDRKDNSFEKRENSLER. The 86-residue stretch at 209 to 294 folds into the KH domain; that stretch reads TITVVSLPND…EMVEKAKKEM (86 aa). The HD domain occupies 335-428; that stretch reads VLNHSIEVAN…VAAANSISAA (94 aa).

Belongs to the RNase Y family.

It localises to the cell membrane. In terms of biological role, endoribonuclease that initiates mRNA decay. The sequence is that of Ribonuclease Y 1 from Pediococcus pentosaceus (strain ATCC 25745 / CCUG 21536 / LMG 10740 / 183-1w).